Here is a 483-residue protein sequence, read N- to C-terminus: Dual specificity protein phosphatase 10 (483 aa).

In terms of domain architecture, Rhodanese spans 169 to 286; it reads PSQGPVIIDC…FKQNHGNLCD (118 aa). The segment at 200-216 is interaction with MAP kinases; that stretch reads KISRRRLQQGKITVLDL. Residues 322-465 enclose the Tyrosine-protein phosphatase domain; sequence ELTPILPFLF…LLEFEEDLNN (144 aa). The active-site Phosphocysteine intermediate is the Cys409.

Belongs to the protein-tyrosine phosphatase family. Non-receptor class dual specificity subfamily. Monomer. Interacts with MAPK14.

It is found in the cytoplasm. The protein resides in the nucleus. The enzyme catalyses O-phospho-L-tyrosyl-[protein] + H2O = L-tyrosyl-[protein] + phosphate. It catalyses the reaction O-phospho-L-seryl-[protein] + H2O = L-seryl-[protein] + phosphate. The catalysed reaction is O-phospho-L-threonyl-[protein] + H2O = L-threonyl-[protein] + phosphate. In terms of biological role, protein phosphatase involved in the inactivation of MAP kinases. Has a specificity for the MAPK11/MAPK12/MAPK13/MAPK14 subfamily. It preferably dephosphorylates p38. This is Dual specificity protein phosphatase 10 (Dusp10) from Mus musculus (Mouse).